The sequence spans 144 residues: Large ribosomal subunit protein uL15 (144 aa).

The interval 1–44 (MNLNELQPAAGSRHVRNRVGRGTSSGNGKTSGRGQKGQKARGKV) is disordered. The segment covering 23–35 (TSSGNGKTSGRGQ) has biased composition (gly residues).

This sequence belongs to the universal ribosomal protein uL15 family. As to quaternary structure, part of the 50S ribosomal subunit.

Its function is as follows. Binds to the 23S rRNA. In Leuconostoc mesenteroides subsp. mesenteroides (strain ATCC 8293 / DSM 20343 / BCRC 11652 / CCM 1803 / JCM 6124 / NCDO 523 / NBRC 100496 / NCIMB 8023 / NCTC 12954 / NRRL B-1118 / 37Y), this protein is Large ribosomal subunit protein uL15.